An 874-amino-acid polypeptide reads, in one-letter code: Adhesion G-protein coupled receptor D1 (874 aa).

An N-terminal signal peptide occupies residues 1-25; sequence MEKLLRLCCWYSWLLLFYYNFQVRG. Residues 26 to 567 are Extracellular-facing; that stretch reads VYSRSQDHPG…LARGHQVALS (542 aa). In terms of domain architecture, Pentraxin (PTX) spans 79–276; the sequence is KGVTLLYYGR…ASPVMPTDAY (198 aa). Asn-90, Asn-185, Asn-282, Asn-302, Asn-319, Asn-394, Asn-476, Asn-501, and Asn-533 each carry an N-linked (GlcNAc...) asparagine glycan. The GAIN-B domain occupies 371–557; the sequence is QVTVEGSSAM…AILMQVVPLE (187 aa). 2 disulfide bridges follow: Cys-510-Cys-539 and Cys-527-Cys-541. The interval 510 to 557 is GPS; the sequence is CAFLDFSSGEGVWSNHGCALTRGNLTYSVCRCTHLTNFAILMQVVPLE. Residues 546-554 form a stachel region; it reads NFAILMQVV. 17beta-hydroxy-5alpha-androstan-3-one is bound at residue Gln-563. A helical transmembrane segment spans residues 568–590; that stretch reads SISYVGCSLSVLCLVATLVTFAV. Residues 591–601 lie on the Cytoplasmic side of the membrane; it reads LSSVSTIRNQR. A helical membrane pass occupies residues 602-623; it reads YHIHANLSFAVLVAQVLLLISF. Topologically, residues 624-632 are extracellular; the sequence is RLEPGTTPC. Cys-632 and Cys-704 are oxidised to a cystine. Residues 633–655 traverse the membrane as a helical segment; the sequence is QVMAVLLHYFFLSAFAWMLVEGL. The Cytoplasmic portion of the chain corresponds to 656 to 673; sequence HLYSMVIKVFGSEDSKHR. Residues 674-695 traverse the membrane as a helical segment; the sequence is YYYGMGWGFPLLICIISLSFAM. Over 696–710 the chain is Extracellular; the sequence is DSYGTSNNCWLSLAS. A helical membrane pass occupies residues 711–732; that stretch reads GAIWAFVAPALFVIVVNIGILI. Residues 733 to 757 are Cytoplasmic-facing; that stretch reads AVTRVISQISADNYKIHGDPSAFKL. Residues 758–780 form a helical membrane-spanning segment; it reads TAKAVAVLLPILGTSWVFGVLAV. The Extracellular portion of the chain corresponds to 781–783; sequence NGC. A helical membrane pass occupies residues 784-810; that stretch reads AVVFQYMFATLNSLQGLFIFLFHCLLN. Position 795 (Asn-795) interacts with 17beta-hydroxy-5alpha-androstan-3-one. The Cytoplasmic segment spans residues 811 to 874; it reads SEVRAAFKHK…SAHRVDLSAV (64 aa). A disordered region spans residues 854-874; sequence TKLSPWDKSSHSAHRVDLSAV. The span at 861–874 shows a compositional bias: basic and acidic residues; sequence KSSHSAHRVDLSAV.

It belongs to the G-protein coupled receptor 2 family. Adhesion G-protein coupled receptor (ADGR) subfamily. Heterodimer of 2 chains generated by proteolytic processing; the large extracellular N-terminal fragment and the membrane-bound C-terminal fragment predominantly remain associated and non-covalently linked. Interacts with ESYT1; interaction takes place in absence of cytosolic calcium and inhibits the G protein-coupled receptor activity of ADGRD1. Post-translationally, autoproteolytically processed at the GPS region of the GAIN-B domain; this cleavage modulates receptor activity. Cleavage takes place early in the secretory pathway before N-glycosylation. As to expression, up-regulated in CD133(+) cell population of glioblastoma.

Its subcellular location is the cell membrane. Its activity is regulated as follows. Forms a heterodimer of 2 chains generated by proteolytic processing that remain associated through non-covalent interactions mediated by the GAIN-B domain. In the inactivated receptor, the Stachel sequence (also named stalk) is embedded in the GAIN-B domain, where it adopts a beta-strand conformation. On activation, the Stachel moves into the 7 transmembrane region and adopts a twisted hook-shaped configuration that forms contacts within the receptor, leading to coupling of a G-alpha protein, which activates signaling. The cleaved GAIN-B and N-terminal domains can then dissociate from the rest of the receptor. Interaction with ESYT1 in absence of cytosolic calcium inhibits the G protein-coupled receptor activity; interaction and inhibition is relieved when cytosolic calcium increases. Activated by AP503, a small molecule that activates ADGRD1 without activating androgen nuclear receptors: AP503 enhances muscle strength without eliciting androgenic adverse effects. Activated by the 8E3E8 antibody that targets the N-terminus. Its function is as follows. Adhesion G-protein coupled receptor (aGPCR) for androgen hormone 5alpha-dihydrotestosterone (5alpha-DHT), also named 17beta-hydroxy-5alpha-androstan-3-one, the most potent hormone among androgens. Also activated by methenolone drug. Ligand binding causes a conformation change that triggers signaling via guanine nucleotide-binding proteins (G proteins) and modulates the activity of downstream effectors, such as adenylate cyclase. ADGRD1 is coupled to G(s) G proteins and mediates activation of adenylate cyclase activity. Acts as a 5alpha-DHT receptor in muscle cells, thereby increasing intracellular cyclic AMP (cAMP) levels and enhancing muscle strength. This Homo sapiens (Human) protein is Adhesion G-protein coupled receptor D1.